Here is a 104-residue protein sequence, read N- to C-terminus: Pole-localizer protein TmaR (104 aa).

2 coiled-coil regions span residues 13 to 43 and 76 to 96; these read RKNK…NLLD and SAEI…LTEE.

Belongs to the pole-localizer TmaR family.

It is found in the cytoplasm. In terms of biological role, pole-localizer protein involved in the regulation of several cellular processes. The sequence is that of Pole-localizer protein TmaR from Vibrio vulnificus (strain CMCP6).